Consider the following 343-residue polypeptide: Aspartate carbamoyltransferase catalytic subunit (343 aa).

Residues Arg91 and Thr92 each contribute to the carbamoyl phosphate site. Lys119 is an L-aspartate binding site. Carbamoyl phosphate is bound by residues Arg141, His171, and Gln174. Arg204 and Arg259 together coordinate L-aspartate. Positions 300 and 301 each coordinate carbamoyl phosphate.

Belongs to the aspartate/ornithine carbamoyltransferase superfamily. ATCase family. As to quaternary structure, heterododecamer (2C3:3R2) of six catalytic PyrB chains organized as two trimers (C3), and six regulatory PyrI chains organized as three dimers (R2).

The catalysed reaction is carbamoyl phosphate + L-aspartate = N-carbamoyl-L-aspartate + phosphate + H(+). It participates in pyrimidine metabolism; UMP biosynthesis via de novo pathway; (S)-dihydroorotate from bicarbonate: step 2/3. Its function is as follows. Catalyzes the condensation of carbamoyl phosphate and aspartate to form carbamoyl aspartate and inorganic phosphate, the committed step in the de novo pyrimidine nucleotide biosynthesis pathway. The sequence is that of Aspartate carbamoyltransferase catalytic subunit from Burkholderia thailandensis (strain ATCC 700388 / DSM 13276 / CCUG 48851 / CIP 106301 / E264).